Reading from the N-terminus, the 353-residue chain is Photosystem II protein D1 (353 aa).

N-acetylthreonine is present on T2. Position 2 is a phosphothreonine (T2). 3 helical membrane passes run 29–46 (YIGW…TATS), 118–133 (HFLL…EWEL), and 142–156 (WIAV…AATA). Residue H118 participates in chlorophyll a binding. Y126 contacts pheophytin a. [CaMn4O5] cluster-binding residues include D170 and E189. The helical transmembrane segment at 197–218 (FHMLGVAGVFGGSLFSAMHGSL) threads the bilayer. H198 lines the chlorophyll a pocket. Residues H215 and 264-265 (SF) each bind a quinone. Fe cation is bound at residue H215. Residue H272 coordinates Fe cation. The chain crosses the membrane as a helical span at residues 274-288 (FLAAWPVVGIWFTAL). The [CaMn4O5] cluster site is built by H332, E333, D342, and A344. The propeptide occupies 345–353 (SVEAPSTNG).

The protein belongs to the reaction center PufL/M/PsbA/D family. PSII is composed of 1 copy each of membrane proteins PsbA, PsbB, PsbC, PsbD, PsbE, PsbF, PsbH, PsbI, PsbJ, PsbK, PsbL, PsbM, PsbT, PsbX, PsbY, PsbZ, Psb30/Ycf12, at least 3 peripheral proteins of the oxygen-evolving complex and a large number of cofactors. It forms dimeric complexes. The D1/D2 heterodimer binds P680, chlorophylls that are the primary electron donor of PSII, and subsequent electron acceptors. It shares a non-heme iron and each subunit binds pheophytin, quinone, additional chlorophylls, carotenoids and lipids. D1 provides most of the ligands for the Mn4-Ca-O5 cluster of the oxygen-evolving complex (OEC). There is also a Cl(-1) ion associated with D1 and D2, which is required for oxygen evolution. The PSII complex binds additional chlorophylls, carotenoids and specific lipids. serves as cofactor. Tyr-161 forms a radical intermediate that is referred to as redox-active TyrZ, YZ or Y-Z. Post-translationally, C-terminally processed by CTPA; processing is essential to allow assembly of the oxygen-evolving complex and thus photosynthetic growth.

The protein localises to the plastid. Its subcellular location is the chloroplast thylakoid membrane. It carries out the reaction 2 a plastoquinone + 4 hnu + 2 H2O = 2 a plastoquinol + O2. Its function is as follows. Photosystem II (PSII) is a light-driven water:plastoquinone oxidoreductase that uses light energy to abstract electrons from H(2)O, generating O(2) and a proton gradient subsequently used for ATP formation. It consists of a core antenna complex that captures photons, and an electron transfer chain that converts photonic excitation into a charge separation. The D1/D2 (PsbA/PsbD) reaction center heterodimer binds P680, the primary electron donor of PSII as well as several subsequent electron acceptors. The sequence is that of Photosystem II protein D1 from Acorus calamus (Sweet flag).